The sequence spans 59 residues: Small ribosomal subunit protein bS21 (59 aa).

Residues 27 to 59 (GLMAEMRKREHYEKPSVRRKKKAQARNKKKRYA) form a disordered region. Over residues 31–42 (EMRKREHYEKPS) the composition is skewed to basic and acidic residues. Residues 43 to 59 (VRRKKKAQARNKKKRYA) are compositionally biased toward basic residues.

It belongs to the bacterial ribosomal protein bS21 family.

In Carboxydothermus hydrogenoformans (strain ATCC BAA-161 / DSM 6008 / Z-2901), this protein is Small ribosomal subunit protein bS21.